Consider the following 289-residue polypeptide: MTEQVNNDTTSDTTTTITTVYISNLPFTASERDLHAFLNNYGASSVLIPTQTVRRFSKRHNSNPRKPLGIAFAQFANNTLALKAIQDLNGTVFQNQKLFLKLHVPYEADSTPDTDVKKPKEKNKVKKTPETAADTVYCHDLPDDITDSEIRELFQLYSPQEIWIYRSKVYRRKCIPFAPHQITAALVTLQSETPIGDICDSVAKTATLRGKSIIVKPAYVSKIQEIKQLVKDNLTNARDPPPAALAEPAPAPAPVEPAEQVQEGQDNAETNDVPPPPASSSDRPTVAAT.

In terms of domain architecture, RRM spans 18-105 (TTVYISNLPF…QKLFLKLHVP (88 aa)). Residues 235–289 (TNARDPPPAALAEPAPAPAPVEPAEQVQEGQDNAETNDVPPPPASSSDRPTVAAT) are disordered. The segment covering 239–255 (DPPPAALAEPAPAPAPV) has biased composition (pro residues). Polar residues predominate over residues 279–289 (SSSDRPTVAAT).

This sequence belongs to the RRT5 family.

Functionally, may be involved in the modulation of rDNA transcription. The protein is Regulator of rDNA transcription protein 5 (RRT5) of Saccharomyces cerevisiae (strain RM11-1a) (Baker's yeast).